Here is a 912-residue protein sequence, read N- to C-terminus: Alpha-actinin-4 (912 aa).

The tract at residues 1 to 267 is actin-binding; sequence MVDYHAANQA…IMTYVSSFYH (267 aa). The interaction with VCL stretch occupies residues 12 to 27; that stretch reads QYGPNSGGGNGAGGGG. Residues 12–31 are disordered; it reads QYGPNSGGGNGAGGGGSMGD. The segment covering 16-29 has biased composition (gly residues); the sequence is NSGGGNGAGGGGSM. Tyr32 carries the phosphotyrosine modification. Residues 41-62 form an interaction with VCL region; that stretch reads RDLLLDPAWEKQQRKTFTAWCN. Calponin-homology (CH) domains follow at residues 51 to 155 and 164 to 270; these read KQQR…LRFA and TSAK…HAFS. An LXXLL motif motif is present at residues 85 to 89; it reads LMLLL. Residues 109-127 are interaction with VCL; it reads KINNVNKALDFIASKGVKL. Residue Lys115 is modified to N6-acetyllysine. The interval 178 to 193 is polyphosphoinositide (PIP2)-binding; the sequence is TAPYKNVNVQNFHISW. N6-acetyllysine is present on Lys215. Phosphothreonine is present on Thr250. Spectrin repeat units lie at residues 294-404, 414-519, 529-640, and 650-753; these read HLME…WLLN, HLAE…ALEK, QLHL…ALLE, and HLRR…EVEN. An N6-acetyllysine mark is found at Lys593 and Lys626. A Phosphoserine modification is found at Ser697. Residues 737 to 912 are mediates interaction with MICALL2; it reads WEQLLTTIAR…STALYGESDL (176 aa). EF-hand domains follow at residues 766–801 and 807–842; these read EQMQ…LGYD and QGDA…ETTD. Ca(2+) is bound at residue Asp779. Lys780 is subject to N6-acetyllysine. Residues Asp781 and Glu790 each coordinate Ca(2+). Lys860 bears the N6-acetyllysine mark. Phosphoserine is present on Ser910.

This sequence belongs to the alpha-actinin family. In terms of assembly, homodimer; antiparallel. Interacts with MAGI1. Interacts with PDLIM2. Identified in a complex with CASK, IQGAP1, MAGI2, NPHS1, SPTAN1 and SPTBN1. Identified in a IGF2BP1-dependent mRNP granule complex containing untranslated mRNAs. Component of the CART complex, at least composed of ACTN4, HGS/HRS, MYO5B and TRIM3. Binds TRIM3 at the N-terminus. Interacts with MICALL2 (preferentially in opened conformation); stimulated by RAB13 activation. Interacts with PPARG and RARA. Binds to VCL; this interaction triggers VCL conformational changes. Interacts with SEPTIN14. Interacts with IGSF8.

The protein localises to the nucleus. It localises to the cytoplasm. The protein resides in the cell junction. It is found in the cytoskeleton. Its subcellular location is the stress fiber. The protein localises to the perinuclear region. Functionally, F-actin cross-linking protein which is thought to anchor actin to a variety of intracellular structures. This is a bundling protein. Probably involved in vesicular trafficking via its association with the CART complex. The CART complex is necessary for efficient transferrin receptor recycling but not for EGFR degradation. Involved in tight junction assembly in epithelial cells probably through interaction with MICALL2. Links MICALL2 to the actin cytoskeleton and recruits it to the tight junctions. May also function as a transcriptional coactivator, stimulating transcription mediated by the nuclear hormone receptors PPARG and RARA. Association with IGSF8 regulates the immune synapse formation and is required for efficient T-cell activation. In Mus musculus (Mouse), this protein is Alpha-actinin-4.